Here is a 538-residue protein sequence, read N- to C-terminus: Dolichol kinase (538 aa).

Residues 1–13 are Lumenal-facing; it reads MTRECPSPAPGPG. Residues 14-34 traverse the membrane as a helical segment; the sequence is APLSGSVLAEAAVVFAVVLSI. Residues 35–74 lie on the Cytoplasmic side of the membrane; that stretch reads HATVWDRYSWCAVALAVQAFYVQYKWDRLLQQGSAVFQFR. A helical transmembrane segment spans residues 75 to 95; it reads MSANSGLLPASMVMPLLGLVM. The Lumenal segment spans residues 96 to 111; that stretch reads KERCQTAGNPFFERFG. A helical membrane pass occupies residues 112–132; sequence IVVAATGMAVALFSSVLALGI. The Cytoplasmic segment spans residues 133–134; that stretch reads TR. A helical membrane pass occupies residues 135 to 155; that stretch reads PVPTNTCVILGLAGGVIIYIM. The Lumenal portion of the chain corresponds to 156-163; that stretch reads KHSLSVGE. A helical membrane pass occupies residues 164-184; it reads VIEVLEVLLIFVYLNMILLYL. The Cytoplasmic portion of the chain corresponds to 185 to 188; the sequence is LPRC. Residues 189–209 form a helical membrane-spanning segment; that stretch reads FTPGEALLVLGGISFVLNQLI. At 210–224 the chain is on the lumenal side; it reads KRSLTLVESQGDPVD. A helical transmembrane segment spans residues 225 to 245; it reads FFLLVVVVGMVLMGIFFSTLF. Topologically, residues 246 to 254 are cytoplasmic; sequence VFMDSGTWA. A helical membrane pass occupies residues 255-275; the sequence is SSIFFHLMTCVLSLGVVLPWL. At 276-297 the chain is on the lumenal side; sequence HRLIRRNPLLWLLQFLFQTDTR. Residues 298 to 318 form a helical membrane-spanning segment; that stretch reads IYLLAYWSLLATLACLVVLYQ. The Cytoplasmic segment spans residues 319 to 337; sequence NAKRSSSESKKHQAPTIAR. Residues 338-354 traverse the membrane as a helical segment; it reads KYFHLIVVATYIPGIIF. Residues 355-359 lie on the Lumenal side of the membrane; that stretch reads DRPLL. The chain crosses the membrane as a helical span at residues 360 to 380; sequence YVAATVCLAVFIFLEYVRYFR. Residues 381 to 401 lie on the Cytoplasmic side of the membrane; sequence IKPLGHTLRSFLSLFLDERDS. A helical transmembrane segment spans residues 402–422; the sequence is GPLILTHIYLLLGMSLPIWLI. The Lumenal segment spans residues 423–436; the sequence is PRPCTQKGSLGGAR. Residues 437–457 traverse the membrane as a helical segment; that stretch reads ALVPYAGVLAVGVGDTVASIF. The Cytoplasmic portion of the chain corresponds to 458–472; that stretch reads GSTMGEIRWPGTKKT. Positions 459–474 are CTP-binding; that stretch reads STMGEIRWPGTKKTFE. Residues 473–493 traverse the membrane as a helical segment; the sequence is FEGTMTSIFAQIISVALILIF. Topologically, residues 494–495 are lumenal; that stretch reads DS. Residues 496–516 form a helical membrane-spanning segment; the sequence is GVDLNYSYAWILGSISTVSLL. The Cytoplasmic segment spans residues 517–538; that stretch reads EAYTTQIDNLLLPLYLLILLMA.

It belongs to the polyprenol kinase family. In terms of tissue distribution, ubiquitous.

The protein resides in the endoplasmic reticulum membrane. The catalysed reaction is a di-trans,poly-cis-dolichol + CTP = a di-trans,poly-cis-dolichyl phosphate + CDP + H(+). The protein operates within protein modification; protein glycosylation. Functionally, catalyzes CTP-mediated phosphorylation of dolichol, the terminal step in de novo dolichyl monophosphate (Dol-P) biosynthesis. Dol-P is a lipid carrier essential for the synthesis of N-linked and O-linked oligosaccharides and for GPI anchors. The sequence is that of Dolichol kinase (DOLK) from Homo sapiens (Human).